The primary structure comprises 322 residues: Peptidase 1 (322 aa).

Positions 1 to 18 (MKFVLAIASLLVLSVVYA) are cleaved as a signal peptide. Positions 19–99 (YPSEIRTFEE…LKKEFDLDAG (81 aa)) are excised as a propeptide. A disulfide bridge connects residues Cys-131 and Cys-171. Cys-134 is an active-site residue. Residue Asn-152 is glycosylated (N-linked (GlcNAc...) asparagine). Active-site residues include His-270 and Asn-290.

This sequence belongs to the peptidase C1 family. Expressed in the gut.

The protein localises to the secreted. It carries out the reaction Broad endopeptidase specificity.. Its function is as follows. Probable thiol protease. This is Peptidase 1 from Psoroptes ovis (Sheep scab mite).